The following is a 911-amino-acid chain: Ribonuclease J (911 aa).

The N-terminal 70 residues, 1 to 70 (MMKPASLQGF…VTSAPASGTS (70 aa)), are a transit peptide targeting the chloroplast. The interval 58-90 (SCSVTSAPASGTSSSSKTPRRRSGRLEGVGKSM) is disordered. Positions 63–74 (SAPASGTSSSSK) are enriched in low complexity. 6 residues coordinate Zn(2+): His-175, His-177, Asp-179, His-180, His-245, and Asp-267. Residues 336 to 338 (ASN) and 468 to 472 (HTSGH) each bind substrate. His-494 lines the Zn(2+) pocket. Disordered regions lie at residues 695–723 (VEGN…TLED) and 735–824 (EETA…WKPE). 2 stretches are compositionally biased toward basic and acidic residues: residues 713–722 (SPKEVDRTLE) and 783–795 (ADTE…KENS). Residues 796 to 806 (RDDDELADASD) show a composition bias toward acidic residues. Residues 813–877 (PKRVRKNKWK…QCKSLWASLI (65 aa)) form the Myb-like domain.

The protein belongs to the metallo-beta-lactamase superfamily. RNA-metabolizing metallo-beta-lactamase-like family. Bacterial RNase J subfamily. As to quaternary structure, homodimer. May be a subunit of the RNA degradosome. Zn(2+) is required as a cofactor. In terms of tissue distribution, moslty expressed in inflorescences, seedlings, leaves, flowers and flower buds, and, to a lower extent, in stems, siliques and roots.

It localises to the plastid. It is found in the chloroplast. In terms of biological role, essential protein required during embryogenesis, especially in initiating and maintaining the organization of shoot apical meristems (SAMs), cotyledons, and hypocotyls. Involved in auxin-mediated pathways during embryogenesis. RNase that has both endonuclease and 5'-3' exonuclease activities. Involved in RNA surveillance to prevent overaccumulation of antisense RNA. Probably involved in maturation of rRNA and in some organisms also mRNA maturation and/or decay. The protein is Ribonuclease J of Arabidopsis thaliana (Mouse-ear cress).